The chain runs to 134 residues: Protein LctB (134 aa).

In Bacillus caldotenax, this protein is Protein LctB (lctB).